We begin with the raw amino-acid sequence, 354 residues long: Uroporphyrinogen decarboxylase (354 aa).

Substrate is bound by residues 27–31 (RQAGR), Asp-77, Tyr-154, Ser-209, and His-327.

The protein belongs to the uroporphyrinogen decarboxylase family. As to quaternary structure, homodimer.

Its subcellular location is the cytoplasm. It catalyses the reaction uroporphyrinogen III + 4 H(+) = coproporphyrinogen III + 4 CO2. The protein operates within porphyrin-containing compound metabolism; protoporphyrin-IX biosynthesis; coproporphyrinogen-III from 5-aminolevulinate: step 4/4. Its function is as follows. Catalyzes the decarboxylation of four acetate groups of uroporphyrinogen-III to yield coproporphyrinogen-III. This chain is Uroporphyrinogen decarboxylase, found in Shewanella pealeana (strain ATCC 700345 / ANG-SQ1).